We begin with the raw amino-acid sequence, 421 residues long: Diaminopimelate decarboxylase (421 aa).

N6-(pyridoxal phosphate)lysine is present on Lys-63. Pyridoxal 5'-phosphate contacts are provided by residues Gly-242 and 278-281 (EPGR). Substrate-binding residues include Arg-281, Arg-317, and Tyr-321. Cys-346 (proton donor) is an active-site residue. 2 residues coordinate substrate: Glu-347 and Tyr-375. Tyr-375 is a binding site for pyridoxal 5'-phosphate.

It belongs to the Orn/Lys/Arg decarboxylase class-II family. LysA subfamily. In terms of assembly, homodimer. Pyridoxal 5'-phosphate is required as a cofactor.

It carries out the reaction meso-2,6-diaminopimelate + H(+) = L-lysine + CO2. Its pathway is amino-acid biosynthesis; L-lysine biosynthesis via DAP pathway; L-lysine from DL-2,6-diaminopimelate: step 1/1. Functionally, specifically catalyzes the decarboxylation of meso-diaminopimelate (meso-DAP) to L-lysine. The sequence is that of Diaminopimelate decarboxylase from Zymomonas mobilis subsp. mobilis (strain ATCC 31821 / ZM4 / CP4).